The primary structure comprises 1110 residues: Brother of CDO (1110 aa).

Positions 1-25 (MTTCRRERPILTLLWILMATAGCLA) are cleaved as a signal peptide. Residues 26–850 (DLNEVPQVTV…MVARASDLPY (825 aa)) are Extracellular-facing. Ig-like C2-type domains lie at 31–118 (PQVT…ATVT), 124–208 (DFKL…VKTS), 229–310 (PLEA…VILY), and 318–402 (PEVT…VQLR). Cystine bridges form between Cys-52-Cys-101, Cys-145-Cys-195, Cys-247-Cys-294, and Cys-339-Cys-386. N-linked (GlcNAc...) asparagine glycans are attached at residues Asn-60, Asn-71, Asn-93, Asn-184, and Asn-270. The interval 407–458 (DTTLRPGRDTKPIAATPPMPPSRPSRPDQMLREQPGLVKPPTSSVQPTSLKC) is disordered. Over residues 421–430 (ATPPMPPSRP) the composition is skewed to pro residues. 3 Fibronectin type-III domains span residues 469–566 (APII…GRRP), 603–698 (APDR…VVSG), and 707–807 (PVAG…TKAR). A glycan (N-linked (GlcNAc...) asparagine) is linked at Asn-512. Positions 561–610 (RTGRRPKPEIVASKEQQIQRDDPGASLQSSSQPDHGRLSPPEAPDRPTIS) are disordered. N-linked (GlcNAc...) asparagine glycans are attached at residues Asn-720 and Asn-754. The tract at residues 809 to 828 (FSGQPGRPPPLTLAPPQPPP) is disordered. The segment covering 814-828 (GRPPPLTLAPPQPPP) has biased composition (pro residues). Residues 851 to 871 (LIVGVVLGSIVLIIVTFIPFC) traverse the membrane as a helical segment. Topologically, residues 872–1110 (LWRAWSKQKH…VSFETPPPTI (239 aa)) are cytoplasmic. The tract at residues 1065 to 1110 (SDSCQVGGGDWSSQHPSGTYTGQERGMRFSPSPSVHVSFETPPPTI) is disordered. Over residues 1075 to 1086 (WSSQHPSGTYTG) the composition is skewed to polar residues.

Part of a complex that contains BOC, CDON, NEO1, cadherins and CTNNB1. Interacts with SHH, DHH and IHH. Interacts with NTN3. Interacts with CDH2 and CTNNB1. Interacts with CDH15 only during the early stages of myoblast differentiation. Highly expressed in embryonic somites, limb buds, dermomyotomes and in the neural tube.

The protein resides in the membrane. Its function is as follows. Component of a cell-surface receptor complex that mediates cell-cell interactions between muscle precursor cells. Promotes differentiation of myogenic cells. The sequence is that of Brother of CDO (Boc) from Mus musculus (Mouse).